A 347-amino-acid chain; its full sequence is Palmitoyltransferase ZDHHC19 (347 aa).

The next 2 membrane-spanning stretches (helical) occupy residues 29-49 (VFAA…FGFP) and 59-79 (WAFP…LVSL). The DHHC domain maps to 112-162 (EWCPKCLFHRPPRTYHCPWCNICVEDFDHHCKWVNNCIGHRNFRLFMLLVL). C142 functions as the S-palmitoyl cysteine intermediate in the catalytic mechanism. The next 2 membrane-spanning stretches (helical) occupy residues 156–176 (LFML…VTCL) and 194–214 (AILV…LLLI). A disordered region spans residues 275–347 (IQEKTKPSPP…PTAEPAAGDP (73 aa)).

It belongs to the DHHC palmitoyltransferase family.

The protein localises to the golgi apparatus membrane. It localises to the cytoplasm. Its subcellular location is the perinuclear region. It catalyses the reaction L-cysteinyl-[protein] + hexadecanoyl-CoA = S-hexadecanoyl-L-cysteinyl-[protein] + CoA. In terms of biological role, palmitoyltransferase that mediates palmitoylation oproteins, such as RRAS and SQSTM1. Catalyzes palmitoylation of RRAS, leading to increased cell viability. Acts as a positive regulator of autophagy by mediating palmitoylation of SQSTM1, promoting affinity between SQSTM1 and ATG8 proteins and recruitment of ubiquitinated cargo proteins to autophagosomes. The protein is Palmitoyltransferase ZDHHC19 (Zdhhc19) of Mus musculus (Mouse).